Consider the following 499-residue polypeptide: Trichoplein keratin filament-binding protein (499 aa).

Coiled-coil stretches lie at residues 17–143, 169–304, and 405–485; these read LEQQ…LYEQ, EQIT…LSAL, and NRER…TQRG. Residues 260–426 are trichohyalin/plectin homology domain; sequence RKMEQCRKKT…RQFTSREKKQ (167 aa).

This sequence belongs to the TCHP family.

Its subcellular location is the cytoplasm. It localises to the cytoskeleton. It is found in the microtubule organizing center. The protein localises to the centrosome. May act as a 'capping' or 'branching' protein for keratin filaments in the cell periphery. May regulate K8/K18 filament and desmosome organization mainly at the apical or peripheral regions of simple epithelial cells. The protein is Trichoplein keratin filament-binding protein of Xenopus laevis (African clawed frog).